A 638-amino-acid polypeptide reads, in one-letter code: Sorting nexin-41 (638 aa).

The span at 1 to 14 shows a compositional bias: low complexity; it reads MDSDTSPNPFASSP. The tract at residues 1–69 is disordered; that stretch reads MDSDTSPNPF…MGATVPGPKP (69 aa). Positions 15-30 are enriched in pro residues; it reads PSSPSPRPSLPPPVPR. A PX domain is found at 84–201; sequence GEQVHIVDAL…HRFLEEDVSW (118 aa). Positions 118, 120, 144, and 168 each coordinate a 1,2-diacyl-sn-glycero-3-phospho-(1D-myo-inositol-3-phosphate). Disordered stretches follow at residues 215–239, 408–432, and 545–638; these read KNPL…SEAP, LERG…RERA, and PHPN…LGPL. Over residues 225–239 the composition is skewed to low complexity; it reads PTFQPTTPTSPSEAP. Positions 423-432 are enriched in basic and acidic residues; the sequence is EAARDERERA. The span at 552–562 shows a compositional bias: low complexity; it reads QTQTQVQSQQS. Residues 585 to 601 are compositionally biased toward basic and acidic residues; that stretch reads MKNEIERVEIEIADKPL.

The protein belongs to the sorting nexin family.

The protein resides in the endosome membrane. The protein localises to the endomembrane system. Functionally, may be required for cytoplasm to vacuole transport (Cvt) and pexophagy. In Cryptococcus neoformans var. neoformans serotype D (strain B-3501A) (Filobasidiella neoformans), this protein is Sorting nexin-41 (SNX41).